The sequence spans 408 residues: Histidine--tRNA ligase (408 aa).

It belongs to the class-II aminoacyl-tRNA synthetase family. Homodimer.

It is found in the cytoplasm. The catalysed reaction is tRNA(His) + L-histidine + ATP = L-histidyl-tRNA(His) + AMP + diphosphate + H(+). The polypeptide is Histidine--tRNA ligase (Campylobacter jejuni subsp. jejuni serotype O:6 (strain 81116 / NCTC 11828)).